We begin with the raw amino-acid sequence, 360 residues long: Peptide chain release factor 1 (360 aa).

Position 235 is an N5-methylglutamine (Gln-235). The span at Asp-280–Thr-293 shows a compositional bias: basic and acidic residues. The tract at residues Asp-280 to Ser-300 is disordered.

It belongs to the prokaryotic/mitochondrial release factor family. Post-translationally, methylated by PrmC. Methylation increases the termination efficiency of RF1.

Its subcellular location is the cytoplasm. Its function is as follows. Peptide chain release factor 1 directs the termination of translation in response to the peptide chain termination codons UAG and UAA. This is Peptide chain release factor 1 from Paraburkholderia xenovorans (strain LB400).